Consider the following 590-residue polypeptide: Aspartate--tRNA(Asp/Asn) ligase (590 aa).

Glu-175 is an L-aspartate binding site. Residues 199–202 (QQYK) form an aspartate region. 2 residues coordinate L-aspartate: Arg-221 and His-450. 221 to 223 (RDE) contacts ATP. Residue Glu-484 participates in ATP binding. Arg-491 serves as a coordination point for L-aspartate. Residue 536–539 (GVDR) participates in ATP binding.

This sequence belongs to the class-II aminoacyl-tRNA synthetase family. Type 1 subfamily. Homodimer.

It localises to the cytoplasm. It carries out the reaction tRNA(Asx) + L-aspartate + ATP = L-aspartyl-tRNA(Asx) + AMP + diphosphate. Aspartyl-tRNA synthetase with relaxed tRNA specificity since it is able to aspartylate not only its cognate tRNA(Asp) but also tRNA(Asn). Reaction proceeds in two steps: L-aspartate is first activated by ATP to form Asp-AMP and then transferred to the acceptor end of tRNA(Asp/Asn). The polypeptide is Aspartate--tRNA(Asp/Asn) ligase (Rhodopseudomonas palustris (strain BisB5)).